Here is a 343-residue protein sequence, read N- to C-terminus: MSKIKPSKGAPYARILGVGGYRPTRVVPNEVILEKIDSSDEWIRSRSGIETRHWAGPEETVAAMSVEASGKALADAGIDASRIGAVVVSTVSHFSQTPAIATEIADRLGTDKAAAFDISAGCAGFGYGLTLAKGMVVEGSAEYVLVIGVERLSDLTDLEDRATAFLFGDGAGAVVVGPSQEPAIGPTVWGSEGDKAETIKQTVSWDRFRIGDVSELPLDSEGNVKFPAITQEGQAVFRWAVFEMAKVAQQALDAAGISPDDLDVFIPHQANVRIIDSMVKTLKLPEHVTVARDIRTTGNTSAASIPLAMERLLATGDARSGDTALVIGFGAGLVYAATVVTLP.

Residues cysteine 122 and histidine 268 contribute to the active site. Residues 269-273 are ACP-binding; the sequence is QANVR. Asparagine 299 is an active-site residue.

It belongs to the thiolase-like superfamily. FabH family. In terms of assembly, homodimer.

It is found in the cytoplasm. The enzyme catalyses malonyl-[ACP] + acetyl-CoA + H(+) = 3-oxobutanoyl-[ACP] + CO2 + CoA. It functions in the pathway lipid metabolism; fatty acid biosynthesis. Functionally, essential enzyme that catalyzes the condensation reaction of fatty acid synthesis by the addition to an acyl acceptor of two carbons from malonyl-ACP. Catalyzes the first condensation reaction which initiates fatty acid synthesis and may therefore play a role in governing the total rate of fatty acid production. Possesses both acetoacetyl-ACP synthase and acetyl transacylase activities. Its substrate specificity determines the biosynthesis of branched-chain of fatty acids. The polypeptide is Beta-ketoacyl-[acyl-carrier-protein] synthase III 1 (Streptomyces coelicolor (strain ATCC BAA-471 / A3(2) / M145)).